Consider the following 171-residue polypeptide: Photosystem I assembly protein Ycf3 (171 aa).

TPR repeat units lie at residues 35 to 68 (AFTY…EVDA), 72 to 105 (SYIL…NPYL), and 120 to 153 (GEQA…APTN).

Belongs to the Ycf3 family.

It localises to the plastid. Its subcellular location is the chloroplast thylakoid membrane. In terms of biological role, essential for the assembly of the photosystem I (PSI) complex. May act as a chaperone-like factor to guide the assembly of the PSI subunits. This is Photosystem I assembly protein Ycf3 from Nephroselmis olivacea (Green alga).